Here is a 1071-residue protein sequence, read N- to C-terminus: ATP-dependent helicase/deoxyribonuclease subunit B (1071 aa).

This sequence belongs to the helicase family. AddB/RexB type 2 subfamily. As to quaternary structure, heterodimer of AddA and RexB. Mg(2+) is required as a cofactor.

In terms of biological role, the heterodimer acts as both an ATP-dependent DNA helicase and an ATP-dependent, dual-direction single-stranded exonuclease. Recognizes the chi site generating a DNA molecule suitable for the initiation of homologous recombination. This subunit has 5' -&gt; 3' nuclease activity but not helicase activity. The protein is ATP-dependent helicase/deoxyribonuclease subunit B of Streptococcus pyogenes serotype M3 (strain ATCC BAA-595 / MGAS315).